Reading from the N-terminus, the 539-residue chain is Lysosomal cobalamin transport escort protein LMBD1 (539 aa).

At 1 to 7 the chain is on the extracellular side; the sequence is MAAAASE. Residues 8-28 traverse the membrane as a helical segment; the sequence is LLTGWFLFGLALLAILIFSWV. Residues 29 to 47 lie on the Cytoplasmic side of the membrane; the sequence is YVRKYQSRRESEVISTVTA. Residues 48–68 form a helical membrane-spanning segment; sequence IFALAVALISSALLPVDIFLV. The Extracellular segment spans residues 69-97; sequence SYMKNQNGTFKDWADANVSRQIEDTVLYG. N-linked (GlcNAc...) asparagine glycosylation is found at N75 and N85. Residues 98 to 118 form a helical membrane-spanning segment; it reads YYTLYSIILFCVFLWIPFVYF. At 119–141 the chain is on the cytoplasmic side; the sequence is YYEEKEEDDGNTCSQVKTALKYT. The chain crosses the membrane as a helical span at residues 142 to 162; it reads LGFITVCAVLLLIGAFVPLDI. At 163–185 the chain is on the extracellular side; that stretch reads PNKKNSTEWEKVKLLFEEFGSSH. The N-linked (GlcNAc...) asparagine glycan is linked to N167. The chain crosses the membrane as a helical span at residues 186–206; it reads GLTALSFSISSLTVIGMLAAI. Residues 207–302 lie on the Cytoplasmic side of the membrane; that stretch reads TYTAYGMSAL…KFCEAIRPLK (96 aa). The chain crosses the membrane as a helical span at residues 303-323; it reads IVWGVFFIIVALLFTVSLFLS. Over 324–361 the chain is Extracellular; that stretch reads NLDKALHSAGFDSGFIILGTNLTNPLNMLLPVLQTVFP. N-linked (GlcNAc...) asparagine glycosylation is present at N344. A helical membrane pass occupies residues 362-382; that stretch reads LDYILITTIVMYFIFTSMAGI. Over 383-405 the chain is Cytoplasmic; that stretch reads RNMGIWFFWIRLYKIRRGKTRPQ. A helical membrane pass occupies residues 406–426; that stretch reads ALLFLCMILLLIVLHTSYMIY. Residues 427 to 483 lie on the Extracellular side of the membrane; it reads SLAPQYVMYGSQKYLVQSNKTIDGQPKNVTTFVAKDCDADAPEDQCIVTRTYLFLHK. N445 and N454 each carry an N-linked (GlcNAc...) asparagine glycan. Residues 484–504 form a helical membrane-spanning segment; that stretch reads FWFFSAVYYFGNWAFIAVFLI. At 505 to 539 the chain is on the cytoplasmic side; that stretch reads GLIVSCCKGKKSVIEGEVDEDDSDMSDDELSAYYC.

This sequence belongs to the LIMR family. LMBRD1 subfamily.

The protein localises to the endoplasmic reticulum membrane. The protein resides in the lysosome membrane. It is found in the cell membrane. Its function is as follows. Lysosomal membrane chaperone required to export cobalamin (vitamin B12) from the lysosome to the cytosol, allowing its conversion to cofactors. Targets ABCD4 transporter from the endoplasmic reticulum to the lysosome. Then forms a complex with lysosomal ABCD4 and cytoplasmic MMACHC to transport cobalamin across the lysosomal membrane. May play a role in mediating and regulating the internalization of the insulin receptor. In Gallus gallus (Chicken), this protein is Lysosomal cobalamin transport escort protein LMBD1 (LMBRD1).